A 1303-amino-acid polypeptide reads, in one-letter code: Zinc finger CCCH domain-containing protein 4 (1303 aa).

Residues 1–33 (MEAAPGTPPPPPSESPPPPSPPPPSTPSPPPCS) are compositionally biased toward pro residues. A disordered region spans residues 1–388 (MEAAPGTPPP…RDHDKPHQQS (388 aa)). Over residues 53–73 (DREDGELEEGELEDDGAEETQ) the composition is skewed to acidic residues. Threonine 72 and threonine 75 each carry phosphothreonine. Residues serine 76, serine 92, and serine 94 each carry the phosphoserine modification. Residues 80–99 (ERSRKEKGEKHHSDSDEEKS) are compositionally biased toward basic and acidic residues. A coiled-coil region spans residues 95–128 (DEEKSHRRLKRKRKKEREKEKRRSKKRRKSKHKR). A compositionally biased stretch (basic residues) spans 100 to 130 (HRRLKRKRKKEREKEKRRSKKRRKSKHKRHA). Residues 135 to 144 (DFSDFSDDSD) are compositionally biased toward acidic residues. Residue tyrosine 155 is modified to Phosphotyrosine. Residues 194 to 218 (EDYENEQYGEYEGDEEEDMGKEDYD) are compositionally biased toward acidic residues. Positions 219–235 (DFTKELNQYRRAKEGSS) are enriched in basic and acidic residues. The span at 238 to 251 (RGSRGRGRGYRGRG) shows a compositional bias: basic residues. Over residues 252–274 (SRGGSRGRGMGRGSRGRGRGSMG) the composition is skewed to gly residues. A compositionally biased stretch (acidic residues) spans 278-304 (PEDEEDFYEEEMDYGESEEPMGDDDYD). The segment covering 305–321 (EYSKELNQYRRSKDSRG) has biased composition (basic and acidic residues). Residues 323-346 (GLSRGRGRGSRGRGKGMGRGRGRG) show a composition bias toward basic residues. The segment covering 358–369 (NDDEDFYDEDMG) has biased composition (acidic residues). Positions 377–388 (RSRDHDKPHQQS) are enriched in basic and acidic residues. 3 consecutive C3H1-type zinc fingers follow at residues 390–417 (KKGK…HDIE), 419–446 (PKKR…HGDF), and 447–470 (PCKL…HDPL). A compositionally biased stretch (acidic residues) spans 486–496 (AEAGAEDEKEV). The segment at 486–571 (AEAGAEDEKE…HEPLSPQQLQ (86 aa)) is disordered. Pro residues-rich tracts occupy residues 507-529 (LPKP…PQAP) and 539-558 (GGPP…PQMP). An Asymmetric dimethylarginine modification is found at arginine 601. The segment covering 605–624 (PGGPPGPMGPGPNMGPPGPM) has biased composition (pro residues). Disordered stretches follow at residues 605–685 (PGGP…SGMM), 710–955 (GLLG…PRSQ), and 996–1288 (PPVP…ASLK). Residues 630 to 650 (PDMHPDMHPDMHPDMHADMHA) show a composition bias toward basic and acidic residues. The segment covering 659-673 (NPGPPMGPGGPPMMP) has biased composition (pro residues). Composition is skewed to basic and acidic residues over residues 717-739 (DYGH…HPLE) and 782-795 (ERAR…KQDR). Residues 767-800 (RALYLRIQQKQQEEEERARRLAESSKQDRENEEG) adopt a coiled-coil conformation. A phosphoserine mark is found at serine 807 and serine 808. Polar residues predominate over residues 815-843 (SSVTSILKTLRQQTSSRPPASVGELSSSG). The segment covering 860–875 (ADPRLSRDPRLTRHVE) has biased composition (basic and acidic residues). A phosphoserine mark is found at serine 904, serine 907, and serine 908. Residues 904 to 918 (SLHSSPVGPSSSKGS) are compositionally biased toward low complexity. Polar residues-rich tracts occupy residues 1028–1038 (GASTDSSTQGA) and 1053–1062 (VNATGSSAAP). Positions 1067–1084 (KPSDPRVRKAPTDPRLQK) are enriched in basic and acidic residues. Residues 1097 to 1110 (PGPAEAPSPTASPS) are compositionally biased toward low complexity. Phosphoserine is present on serine 1104. The residue at position 1106 (threonine 1106) is a Phosphothreonine. Serine 1108, serine 1110, and serine 1114 each carry phosphoserine. Position 1118 is a phosphothreonine (threonine 1118). A compositionally biased stretch (gly residues) spans 1129-1139 (GGLGQGGGGGQ). Residues 1224-1234 (KAAAAPAATTA) are compositionally biased toward low complexity. A compositionally biased stretch (pro residues) spans 1235 to 1245 (TPPPEGAPPQP). Polar residues predominate over residues 1259 to 1268 (VKQTPKTGSG). Phosphoserine is present on residues serine 1269 and serine 1275.

Belongs to the suppressor of sable family. As to quaternary structure, interacts with WDR82.

The protein localises to the chromosome. In terms of biological role, RNA-binding protein that suppresses transcription of long non-coding RNAs (lncRNAs). LncRNAs are defined as transcripts more than 200 nucleotides that are not translated into protein. Together with WDR82, part of a transcription termination checkpoint that promotes transcription termination of lncRNAs and their subsequent degradation by the exosome. The transcription termination checkpoint is activated by the inefficiently spliced first exon of lncRNAs. The chain is Zinc finger CCCH domain-containing protein 4 from Homo sapiens (Human).